Here is a 261-residue protein sequence, read N- to C-terminus: Protein-ADP-ribose hydrolase (261 aa).

In terms of domain architecture, Macro spans 74–261 (ADLKPVTGRG…DEALYNKLMS (188 aa)). 3 residues coordinate ADP-D-ribose: aspartate 93, isoleucine 94, and asparagine 107. Residues cysteine 113, histidine 118, and cysteine 120 each coordinate Zn(2+). Cysteine 120, isoleucine 121, aspartate 122, serine 211, threonine 212, glycine 213, and phenylalanine 215 together coordinate ADP-D-ribose.

The protein belongs to the MacroD-type family. Zn-Macro subfamily. Requires Zn(2+) as cofactor.

The catalysed reaction is 4-O-(ADP-D-ribosyl)-L-aspartyl-[protein] + H2O = L-aspartyl-[protein] + ADP-D-ribose + H(+). Functionally, ADP-ribosylhydrolase that specifically reverses the SirTM-mediated mono-ADP-ribosylation at an asparatate residue of GcvH-L, by releasing ADP-ribose from the target protein. May play a role in the regulation of the response to host-induced oxidative stress. In Treponema medium, this protein is Protein-ADP-ribose hydrolase.